Consider the following 632-residue polypeptide: Mediator of RNA polymerase II transcription subunit 17 (632 aa).

Disordered stretches follow at residues 1–21 and 50–72; these read MSDS…RPDS and EDKH…DLET. Residues 11-21 are compositionally biased toward basic and acidic residues; sequence PIREKRDRPDS. Residues 58 to 72 are compositionally biased toward acidic residues; that stretch reads EEDDEGDKESTDLET.

Belongs to the Mediator complex subunit 17 family. In terms of assembly, component of the Mediator complex.

It is found in the nucleus. Its function is as follows. Component of the Mediator complex, a coactivator involved in the regulated transcription of nearly all RNA polymerase II-dependent genes. Mediator functions as a bridge to convey information from gene-specific regulatory proteins to the basal RNA polymerase II transcription machinery. Mediator is recruited to promoters by direct interactions with regulatory proteins and serves as a scaffold for the assembly of a functional preinitiation complex with RNA polymerase II and the general transcription factors. The polypeptide is Mediator of RNA polymerase II transcription subunit 17 (srb4) (Emericella nidulans (strain FGSC A4 / ATCC 38163 / CBS 112.46 / NRRL 194 / M139) (Aspergillus nidulans)).